The following is a 366-amino-acid chain: Beta sliding clamp (366 aa).

The tract at residues 1–125 (MKFTVEREHL…FPNLDDWQSE (125 aa)) is i. The tract at residues 126 to 253 (VEFTLPQATM…YRRVLPKNPD (128 aa)) is II. Residues 254 to 366 (KHLEAGCDLL…AAYVVMPMRL (113 aa)) are III.

Belongs to the beta sliding clamp family. Forms a ring-shaped head-to-tail homodimer around DNA which binds and tethers DNA polymerases and other proteins to the DNA. The DNA replisome complex has a single clamp-loading complex (3 tau and 1 each of delta, delta', psi and chi subunits) which binds 3 Pol III cores (1 core on the leading strand and 2 on the lagging strand) each with a beta sliding clamp dimer. Additional proteins in the replisome are other copies of gamma, psi and chi, Ssb, DNA helicase and RNA primase.

It localises to the cytoplasm. Functionally, confers DNA tethering and processivity to DNA polymerases and other proteins. Acts as a clamp, forming a ring around DNA (a reaction catalyzed by the clamp-loading complex) which diffuses in an ATP-independent manner freely and bidirectionally along dsDNA. Initially characterized for its ability to contact the catalytic subunit of DNA polymerase III (Pol III), a complex, multichain enzyme responsible for most of the replicative synthesis in bacteria; Pol III exhibits 3'-5' exonuclease proofreading activity. The beta chain is required for initiation of replication as well as for processivity of DNA replication. The sequence is that of Beta sliding clamp (dnaN) from Escherichia coli O157:H7.